A 337-amino-acid polypeptide reads, in one-letter code: 4-hydroxythreonine-4-phosphate dehydrogenase (337 aa).

Residues H138 and T139 each coordinate substrate. The a divalent metal cation site is built by H168, H212, and H267. The substrate site is built by K275, N284, and R293.

Belongs to the PdxA family. As to quaternary structure, homodimer. Zn(2+) is required as a cofactor. It depends on Mg(2+) as a cofactor. Co(2+) serves as cofactor.

It localises to the cytoplasm. It carries out the reaction 4-(phosphooxy)-L-threonine + NAD(+) = 3-amino-2-oxopropyl phosphate + CO2 + NADH. Its pathway is cofactor biosynthesis; pyridoxine 5'-phosphate biosynthesis; pyridoxine 5'-phosphate from D-erythrose 4-phosphate: step 4/5. Catalyzes the NAD(P)-dependent oxidation of 4-(phosphooxy)-L-threonine (HTP) into 2-amino-3-oxo-4-(phosphooxy)butyric acid which spontaneously decarboxylates to form 3-amino-2-oxopropyl phosphate (AHAP). This is 4-hydroxythreonine-4-phosphate dehydrogenase from Beijerinckia indica subsp. indica (strain ATCC 9039 / DSM 1715 / NCIMB 8712).